The sequence spans 173 residues: MENIIARRYAKAIASRADINDFYQNLCILNSAFVLPKFKNIIESNEIKKERKMEFLDSFFDIKNSSFQNFLRLLIENSRLECIPQIVKELERQKAFKENIFVGIVYSKEKLSQENLKDLEVKLNKKFDANIKLNNKISQDDSVKIELEELGYELSFSMKALQNKLNEYILKII.

It belongs to the ATPase delta chain family. In terms of assembly, F-type ATPases have 2 components, F(1) - the catalytic core - and F(0) - the membrane proton channel. F(1) has five subunits: alpha(3), beta(3), gamma(1), delta(1), epsilon(1). F(0) has three main subunits: a(1), b(2) and c(10-14). The alpha and beta chains form an alternating ring which encloses part of the gamma chain. F(1) is attached to F(0) by a central stalk formed by the gamma and epsilon chains, while a peripheral stalk is formed by the delta and b chains.

Its subcellular location is the cell inner membrane. Functionally, f(1)F(0) ATP synthase produces ATP from ADP in the presence of a proton or sodium gradient. F-type ATPases consist of two structural domains, F(1) containing the extramembraneous catalytic core and F(0) containing the membrane proton channel, linked together by a central stalk and a peripheral stalk. During catalysis, ATP synthesis in the catalytic domain of F(1) is coupled via a rotary mechanism of the central stalk subunits to proton translocation. Its function is as follows. This protein is part of the stalk that links CF(0) to CF(1). It either transmits conformational changes from CF(0) to CF(1) or is implicated in proton conduction. This chain is ATP synthase subunit delta, found in Campylobacter jejuni subsp. jejuni serotype O:2 (strain ATCC 700819 / NCTC 11168).